Here is a 297-residue protein sequence, read N- to C-terminus: Protease HtpX homolog (297 aa).

The next 2 helical transmembrane spans lie at 5–25 (IFLFILTNLLVITTIGIVLTI) and 43–63 (LMALLVFSLVVGFVGSFISLG). Residue His154 participates in Zn(2+) binding. The active site involves Glu155. His158 contributes to the Zn(2+) binding site. Helical transmembrane passes span 169-189 (LLQGIVNTFVVFLSRIAAWVA) and 203-223 (FIAMIVFQIIFSILGSLVVFA). Glu229 provides a ligand contact to Zn(2+).

The protein belongs to the peptidase M48B family. Requires Zn(2+) as cofactor.

It is found in the cell membrane. This is Protease HtpX homolog from Bacillus velezensis (strain DSM 23117 / BGSC 10A6 / LMG 26770 / FZB42) (Bacillus amyloliquefaciens subsp. plantarum).